We begin with the raw amino-acid sequence, 334 residues long: Ketol-acid reductoisomerase (NADP(+)) (334 aa).

In terms of domain architecture, KARI N-terminal Rossmann spans 1 to 181 (MTTVYYDQDV…GATRAGVIET (181 aa)). NADP(+) contacts are provided by residues 25 to 28 (YGSQ), R48, S52, and 82 to 85 (DEIQ). H107 is an active-site residue. Residue G133 coordinates NADP(+). Residues 182-327 (TFKEETETDL…RELREMMPFI (146 aa)) enclose the KARI C-terminal knotted domain. D190, E194, E226, and E230 together coordinate Mg(2+). A substrate-binding site is contributed by S251.

It belongs to the ketol-acid reductoisomerase family. Requires Mg(2+) as cofactor.

It catalyses the reaction (2R)-2,3-dihydroxy-3-methylbutanoate + NADP(+) = (2S)-2-acetolactate + NADPH + H(+). The catalysed reaction is (2R,3R)-2,3-dihydroxy-3-methylpentanoate + NADP(+) = (S)-2-ethyl-2-hydroxy-3-oxobutanoate + NADPH + H(+). Its pathway is amino-acid biosynthesis; L-isoleucine biosynthesis; L-isoleucine from 2-oxobutanoate: step 2/4. The protein operates within amino-acid biosynthesis; L-valine biosynthesis; L-valine from pyruvate: step 2/4. Its function is as follows. Involved in the biosynthesis of branched-chain amino acids (BCAA). Catalyzes an alkyl-migration followed by a ketol-acid reduction of (S)-2-acetolactate (S2AL) to yield (R)-2,3-dihydroxy-isovalerate. In the isomerase reaction, S2AL is rearranged via a Mg-dependent methyl migration to produce 3-hydroxy-3-methyl-2-ketobutyrate (HMKB). In the reductase reaction, this 2-ketoacid undergoes a metal-dependent reduction by NADPH to yield (R)-2,3-dihydroxy-isovalerate. The protein is Ketol-acid reductoisomerase (NADP(+)) of Staphylococcus aureus (strain USA300).